The following is a 262-amino-acid chain: 3-deoxy-manno-octulosonate cytidylyltransferase (262 aa).

Belongs to the KdsB family.

It is found in the cytoplasm. It carries out the reaction 3-deoxy-alpha-D-manno-oct-2-ulosonate + CTP = CMP-3-deoxy-beta-D-manno-octulosonate + diphosphate. It participates in nucleotide-sugar biosynthesis; CMP-3-deoxy-D-manno-octulosonate biosynthesis; CMP-3-deoxy-D-manno-octulosonate from 3-deoxy-D-manno-octulosonate and CTP: step 1/1. The protein operates within bacterial outer membrane biogenesis; lipopolysaccharide biosynthesis. In terms of biological role, activates KDO (a required 8-carbon sugar) for incorporation into bacterial lipopolysaccharide in Gram-negative bacteria. This Blochmanniella pennsylvanica (strain BPEN) protein is 3-deoxy-manno-octulosonate cytidylyltransferase.